Here is a 445-residue protein sequence, read N- to C-terminus: Tubby-like F-box protein 8 (445 aa).

An F-box domain is found at 56-102 (ESRWASLPPELLRDVIRRLEASESTWPSRKDVVSCAAVCKAWREMCK).

The protein belongs to the TUB family. Ubiquitous.

The chain is Tubby-like F-box protein 8 (TULP8) from Oryza sativa subsp. japonica (Rice).